Consider the following 98-residue polypeptide: NADH-ubiquinone oxidoreductase chain 4L (98 aa).

Transmembrane regions (helical) follow at residues 1–21, 29–49, and 61–81; these read MPVV…GLLI, SLLC…VTVL, and IILL…LVMV.

Belongs to the complex I subunit 4L family. As to quaternary structure, core subunit of respiratory chain NADH dehydrogenase (Complex I) which is composed of 45 different subunits.

It is found in the mitochondrion inner membrane. The enzyme catalyses a ubiquinone + NADH + 5 H(+)(in) = a ubiquinol + NAD(+) + 4 H(+)(out). Its function is as follows. Core subunit of the mitochondrial membrane respiratory chain NADH dehydrogenase (Complex I) which catalyzes electron transfer from NADH through the respiratory chain, using ubiquinone as an electron acceptor. Part of the enzyme membrane arm which is embedded in the lipid bilayer and involved in proton translocation. This is NADH-ubiquinone oxidoreductase chain 4L (MT-ND4L) from Helarctos malayanus (Malayan sun bear).